A 512-amino-acid chain; its full sequence is Probable cytosol aminopeptidase (512 aa).

Residues Lys284 and Asp289 each coordinate Mn(2+). Lys296 is a catalytic residue. Residues Asp307, Asp366, and Glu368 each coordinate Mn(2+). The active site involves Arg370.

This sequence belongs to the peptidase M17 family. Mn(2+) serves as cofactor.

The protein resides in the cytoplasm. The catalysed reaction is Release of an N-terminal amino acid, Xaa-|-Yaa-, in which Xaa is preferably Leu, but may be other amino acids including Pro although not Arg or Lys, and Yaa may be Pro. Amino acid amides and methyl esters are also readily hydrolyzed, but rates on arylamides are exceedingly low.. The enzyme catalyses Release of an N-terminal amino acid, preferentially leucine, but not glutamic or aspartic acids.. Its function is as follows. Presumably involved in the processing and regular turnover of intracellular proteins. Catalyzes the removal of unsubstituted N-terminal amino acids from various peptides. This Cupriavidus necator (strain ATCC 17699 / DSM 428 / KCTC 22496 / NCIMB 10442 / H16 / Stanier 337) (Ralstonia eutropha) protein is Probable cytosol aminopeptidase.